Consider the following 302-residue polypeptide: Zinc transporter ZIP1 (302 aa).

At 1-6 (MEYLLQ) the chain is on the extracellular side. A helical transmembrane segment spans residues 7–27 (VKIAALVGLLFLTLIFGFIPA). Residues 28-44 (RVKWFRDTDGTETHRTV) are Cytoplasmic-facing. A helical membrane pass occupies residues 45-65 (LSLISCFAGGVFLSACFLDII). At 66-80 (PDYLSDINTELHARQ) the chain is on the extracellular side. The chain crosses the membrane as a helical span at residues 81–101 (LETSFPLPEFIMAAGFFTVLI). Residues 102–158 (LERIVLNCKEMRATHEERTTLIPERKSGHGHGHGDGPDPESSGHHVHVDFQAHSPFR) are Cytoplasmic-facing. A disordered region spans residues 123–145 (IPERKSGHGHGHGDGPDPESSGH). Residues 159–179 (SFMLFLSLSLHSIFEGLAIGL) form a helical membrane-spanning segment. The Extracellular portion of the chain corresponds to 180-185 (QTTDPK). Residues 186–206 (VVEICIAILVHKSIIVFSLAV) form a helical membrane-spanning segment. Topologically, residues 207-216 (KLVQSAIPPL) are cytoplasmic. Residues 217–237 (WVAAYIGVFALMSPVGIAIGI) form a helical membrane-spanning segment. The Extracellular segment spans residues 238–251 (SVMEAQLAAGPLIQ). The helical transmembrane segment at 252–272 (AILEGFAAGTFVYITFLEILP) threads the bilayer. Topologically, residues 273-281 (HELNSPGKQ) are cytoplasmic. Residues 282–302 (LLKVLFLLLGFSIMAALSFLG) traverse the membrane as a helical segment.

Belongs to the ZIP transporter (TC 2.A.5) family. In terms of tissue distribution, highest levels in ovary, lower levels in intestine and gill, barely detected in kidney.

Its subcellular location is the cell membrane. The protein resides in the endoplasmic reticulum membrane. It catalyses the reaction Zn(2+)(in) = Zn(2+)(out). Functionally, transporter for the divalent cation Zn(2+). Mediates the influx of Zn(2+) into cells from extracellular space. This Takifugu rubripes (Japanese pufferfish) protein is Zinc transporter ZIP1 (slc39a1).